Consider the following 232-residue polypeptide: 7-cyano-7-deazaguanine synthase (232 aa).

8 to 18 provides a ligand contact to ATP; sequence FSGGQDSTTCL. Zn(2+) is bound by residues Cys-187, Cys-196, Cys-199, and Cys-202.

Belongs to the QueC family. Zn(2+) serves as cofactor.

The catalysed reaction is 7-carboxy-7-deazaguanine + NH4(+) + ATP = 7-cyano-7-deazaguanine + ADP + phosphate + H2O + H(+). Its pathway is purine metabolism; 7-cyano-7-deazaguanine biosynthesis. In terms of biological role, catalyzes the ATP-dependent conversion of 7-carboxy-7-deazaguanine (CDG) to 7-cyano-7-deazaguanine (preQ(0)). The chain is 7-cyano-7-deazaguanine synthase from Photobacterium profundum (strain SS9).